The chain runs to 244 residues: Agamous-like MADS-box protein MADS3 (244 aa).

Residues 1–61 (MGRGRVELKR…GKLYEFGSAG (61 aa)) enclose the MADS-box domain. Residues 85–175 (TQSWYQEVSK…KLKLEAEGQS (91 aa)) form the K-box domain. Positions 180–206 (QGSWNPSTATAGNSSFPVHPSQSNPMD) are disordered. Positions 181-204 (GSWNPSTATAGNSSFPVHPSQSNP) are enriched in polar residues.

As to expression, expressed in flowers and seeds.

It is found in the nucleus. Functionally, probable transcription factor involved in flower development. In Vitis vinifera (Grape), this protein is Agamous-like MADS-box protein MADS3.